The chain runs to 371 residues: tRNA-specific 2-thiouridylase MnmA (371 aa).

Residues 11–18 and Met-37 each bind ATP; that span reads GMSGGVDS. The segment at 97–99 is interaction with target base in tRNA; the sequence is NPD. Catalysis depends on Cys-102, which acts as the Nucleophile. A disulfide bridge links Cys-102 with Cys-199. Residue Gly-127 coordinates ATP. The tract at residues 149–151 is interaction with tRNA; the sequence is KDQ. Catalysis depends on Cys-199, which acts as the Cysteine persulfide intermediate. The tract at residues 311–312 is interaction with tRNA; that stretch reads RY.

Belongs to the MnmA/TRMU family.

Its subcellular location is the cytoplasm. It carries out the reaction S-sulfanyl-L-cysteinyl-[protein] + uridine(34) in tRNA + AH2 + ATP = 2-thiouridine(34) in tRNA + L-cysteinyl-[protein] + A + AMP + diphosphate + H(+). Catalyzes the 2-thiolation of uridine at the wobble position (U34) of tRNA, leading to the formation of s(2)U34. This chain is tRNA-specific 2-thiouridylase MnmA, found in Idiomarina loihiensis (strain ATCC BAA-735 / DSM 15497 / L2-TR).